The following is a 356-amino-acid chain: Serine/arginine-rich splicing factor RS41 (356 aa).

2 consecutive RRM domains span residues 2–74 and 96–167; these read KPVF…WTKN and KTLF…YAVK. The disordered stretch occupies residues 73–92; sequence KNDRGGAGRSGGSRRSSSGL. Positions 168 to 186 are enriched in basic and acidic residues; sequence DDDSRGNGYSPERRRDRSP. The interval 168-356 is disordered; that stretch reads DDDSRGNGYS…SPSRSPPAEE (189 aa). 6 positions are modified to phosphoserine: Ser192, Ser194, Ser210, Ser239, Ser254, and Ser274. Positions 238-253 are enriched in basic and acidic residues; sequence LSPDYKRDDRRRERVA. 3 repeat units span residues 267–278, 279–290, and 291–302. The 4 X 12 AA tandem repeats of [KE]-[GK]-R -[GR]-E-S-R-S-P-P-P-Y stretch occupies residues 267 to 307; sequence KGRGESRSPPPYEKRRESRSPPPYEKRRESRSPPPYEKRRE. Residues 268 to 306 show a composition bias toward basic and acidic residues; the sequence is GRGESRSPPPYEKRRESRSPPPYEKRRESRSPPPYEKRR. A 4; truncated repeat occupies 303 to 307; sequence EKRRE. Phosphoserine occurs at positions 309, 324, 342, 347, and 351.

The protein belongs to the splicing factor SR family. RS subfamily. Component of the spliceosome. Interacts with RCF3 and CPL1. Interacts with DRB1/HYL1 and SE. In terms of tissue distribution, leaves, stem, roots and flowers.

The protein resides in the nucleus. Its subcellular location is the nucleus speckle. Functionally, required for constitutive and alternative pre-mRNA splicing. Involved in primary miRNA processing and pri-miRNA biogenesis. Binds both intronless and intron-containing pri-miRNAs. The sequence is that of Serine/arginine-rich splicing factor RS41 (RS41) from Arabidopsis thaliana (Mouse-ear cress).